The sequence spans 156 residues: Small ribosomal subunit protein uS7 (156 aa).

Belongs to the universal ribosomal protein uS7 family. Part of the 30S ribosomal subunit. Contacts proteins S9 and S11.

In terms of biological role, one of the primary rRNA binding proteins, it binds directly to 16S rRNA where it nucleates assembly of the head domain of the 30S subunit. Is located at the subunit interface close to the decoding center, probably blocks exit of the E-site tRNA. The polypeptide is Small ribosomal subunit protein uS7 (Klebsiella pneumoniae subsp. pneumoniae (strain ATCC 700721 / MGH 78578)).